Here is a 239-residue protein sequence, read N- to C-terminus: Purine nucleoside phosphorylase DeoD-type (239 aa).

His-5 is a binding site for a purine D-ribonucleoside. Phosphate is bound by residues Gly-21, Arg-25, Arg-44, and 88–91; that span reads RVGS. A purine D-ribonucleoside-binding positions include 180–182 and 204–205; these read EME and SD. Asp-205 acts as the Proton donor in catalysis.

It belongs to the PNP/UDP phosphorylase family. In terms of assembly, homohexamer; trimer of homodimers.

The enzyme catalyses a purine D-ribonucleoside + phosphate = a purine nucleobase + alpha-D-ribose 1-phosphate. It carries out the reaction a purine 2'-deoxy-D-ribonucleoside + phosphate = a purine nucleobase + 2-deoxy-alpha-D-ribose 1-phosphate. Functionally, catalyzes the reversible phosphorolytic breakdown of the N-glycosidic bond in the beta-(deoxy)ribonucleoside molecules, with the formation of the corresponding free purine bases and pentose-1-phosphate. The protein is Purine nucleoside phosphorylase DeoD-type of Salmonella arizonae (strain ATCC BAA-731 / CDC346-86 / RSK2980).